We begin with the raw amino-acid sequence, 438 residues long: Trigger factor (438 aa).

The PPIase FKBP-type domain occupies 163–248 (GDIITIDYEG…VKEIKRKELA (86 aa)).

This sequence belongs to the FKBP-type PPIase family. Tig subfamily.

Its subcellular location is the cytoplasm. It carries out the reaction [protein]-peptidylproline (omega=180) = [protein]-peptidylproline (omega=0). Its function is as follows. Involved in protein export. Acts as a chaperone by maintaining the newly synthesized protein in an open conformation. Functions as a peptidyl-prolyl cis-trans isomerase. The protein is Trigger factor of Desulforudis audaxviator (strain MP104C).